Reading from the N-terminus, the 298-residue chain is Small ribosomal subunit protein uS2 (298 aa).

The segment at Glu232–Glu298 is disordered. Acidic residues predominate over residues Phe234 to Pro250. Over residues Glu251 to Ala276 the composition is skewed to low complexity.

The protein belongs to the universal ribosomal protein uS2 family.

This chain is Small ribosomal subunit protein uS2, found in Acaryochloris marina (strain MBIC 11017).